The chain runs to 202 residues: Protein G1-like4 (202 aa).

2 disordered regions span residues 1-44 and 158-202; these read MDLS…RYEA and RARG…GAAC. The span at 12 to 22 shows a compositional bias: gly residues; it reads SGGGNGGGGGS. The span at 23–36 shows a compositional bias: low complexity; sequence SSSNSSPSMGAGAP. Residues 41–168 form the ALOG domain; the sequence is RYEAQKRRDW…ARGVSYEKKK (128 aa). A Nuclear localization signal motif is present at residues 166–170; that stretch reads KKKRK. Residues 173 to 186 are compositionally biased toward low complexity; the sequence is QQQQLQGGDSSGLH. Over residues 192–202 the composition is skewed to pro residues; the sequence is PPPPPPAGAAC.

The protein belongs to the plant homeotic and developmental regulators ALOG protein family.

It localises to the nucleus. In terms of biological role, probable transcription regulator that acts as a developmental regulator by promoting cell growth in response to light. The protein is Protein G1-like4 of Oryza sativa subsp. indica (Rice).